A 433-amino-acid polypeptide reads, in one-letter code: UPF0597 protein DNO_0106 (433 aa).

This sequence belongs to the UPF0597 family.

This Dichelobacter nodosus (strain VCS1703A) protein is UPF0597 protein DNO_0106.